The sequence spans 709 residues: Fatty acid oxidation complex subunit alpha (709 aa).

Residues 1–188 (MEKTFNLTRR…KMGLVNDVVP (188 aa)) are enoyl-CoA hydratase. The interval 308 to 709 (RKVKKAVILG…EMAAEKTRFF (402 aa)) is 3-hydroxyacyl-CoA dehydrogenase.

It in the N-terminal section; belongs to the enoyl-CoA hydratase/isomerase family. The protein in the central section; belongs to the 3-hydroxyacyl-CoA dehydrogenase family. Heterotetramer of two alpha chains (FadJ) and two beta chains (FadI).

The protein resides in the cytoplasm. The enzyme catalyses a (3S)-3-hydroxyacyl-CoA = a (2E)-enoyl-CoA + H2O. It catalyses the reaction a 4-saturated-(3S)-3-hydroxyacyl-CoA = a (3E)-enoyl-CoA + H2O. The catalysed reaction is a (3S)-3-hydroxyacyl-CoA + NAD(+) = a 3-oxoacyl-CoA + NADH + H(+). It carries out the reaction (3S)-3-hydroxybutanoyl-CoA = (3R)-3-hydroxybutanoyl-CoA. It participates in lipid metabolism; fatty acid beta-oxidation. Its function is as follows. Catalyzes the formation of a hydroxyacyl-CoA by addition of water on enoyl-CoA. Also exhibits 3-hydroxyacyl-CoA epimerase and 3-hydroxyacyl-CoA dehydrogenase activities. This chain is Fatty acid oxidation complex subunit alpha, found in Shewanella sp. (strain MR-4).